The primary structure comprises 90 residues: Accessory gland-specific peptide 26Ab (90 aa).

The N-terminal stretch at 1–21 (MNYFAVICIFSCICLWQFSDA) is a signal peptide.

Main cells and secondary cells of the accessory glands of 1 day old virgin males (at protein level). In 5 day old virgin males, only detected in the secondary cells (at protein level). Reappears in the main cells after mating (at protein level). First detected in adult males 3-4 hr after eclosion, levels increase reaching a peak at day 3-5 which is maintained until at least day 10 of adulthood (at protein level). In unmated male adults, levels are maintained for the first 6 days of adulthood and then gradually decrease for at least the next 8 days. No expression in females.

Its subcellular location is the secreted. It is found in the extracellular space. The protein localises to the cytoplasm. Its function is as follows. This protein is transferred from male to female during mating and may affect egglaying and behavior after mating. This Drosophila melanogaster (Fruit fly) protein is Accessory gland-specific peptide 26Ab.